The sequence spans 509 residues: DEAD-box ATP-dependent RNA helicase CshA (509 aa).

The Q motif motif lies at 2–30; sequence QNFKELGISDKTVQTLEAMGFKEPTPIQK. Positions 33-203 constitute a Helicase ATP-binding domain; it reads IPYALEGDDI…QQFMKAPKII (171 aa). Residue 46–53 coordinates ATP; the sequence is AQTGTGKT. Residues 150 to 153 carry the DEAD box motif; sequence DEAD. The 162-residue stretch at 214-375 folds into the Helicase C-terminal domain; that stretch reads QIDEYYTIVK…LRPPHRKEVL (162 aa). 2 stretches are compositionally biased toward basic residues: residues 440–459 and 467–482; these read ARKNRSSKGGSRRSNHKRGN and RRSKGSKGQSSKKKNQ. Residues 440 to 509 are disordered; the sequence is ARKNRSSKGG…KGRTFADHQK (70 aa). The span at 483-492 shows a compositional bias: basic and acidic residues; sequence KKFDRRDKQQ.

Belongs to the DEAD box helicase family. CshA subfamily. Oligomerizes, may be a member of the RNA degradosome.

It localises to the cytoplasm. The catalysed reaction is ATP + H2O = ADP + phosphate + H(+). DEAD-box RNA helicase possibly involved in RNA degradation. Unwinds dsRNA in both 5'- and 3'-directions, has RNA-dependent ATPase activity. This chain is DEAD-box ATP-dependent RNA helicase CshA, found in Staphylococcus epidermidis (strain ATCC 35984 / DSM 28319 / BCRC 17069 / CCUG 31568 / BM 3577 / RP62A).